Here is a 447-residue protein sequence, read N- to C-terminus: Asparagine--tRNA ligase (447 aa).

This sequence belongs to the class-II aminoacyl-tRNA synthetase family. As to quaternary structure, homodimer.

The protein localises to the cytoplasm. It carries out the reaction tRNA(Asn) + L-asparagine + ATP = L-asparaginyl-tRNA(Asn) + AMP + diphosphate + H(+). The chain is Asparagine--tRNA ligase from Lactococcus lactis subsp. cremoris (strain MG1363).